The primary structure comprises 151 residues: SsrA-binding protein (151 aa).

Positions G121 to A151 are disordered. Over residues D126–R142 the composition is skewed to basic and acidic residues.

The protein belongs to the SmpB family.

It is found in the cytoplasm. Required for rescue of stalled ribosomes mediated by trans-translation. Binds to transfer-messenger RNA (tmRNA), required for stable association of tmRNA with ribosomes. tmRNA and SmpB together mimic tRNA shape, replacing the anticodon stem-loop with SmpB. tmRNA is encoded by the ssrA gene; the 2 termini fold to resemble tRNA(Ala) and it encodes a 'tag peptide', a short internal open reading frame. During trans-translation Ala-aminoacylated tmRNA acts like a tRNA, entering the A-site of stalled ribosomes, displacing the stalled mRNA. The ribosome then switches to translate the ORF on the tmRNA; the nascent peptide is terminated with the 'tag peptide' encoded by the tmRNA and targeted for degradation. The ribosome is freed to recommence translation, which seems to be the essential function of trans-translation. This chain is SsrA-binding protein, found in Chromobacterium violaceum (strain ATCC 12472 / DSM 30191 / JCM 1249 / CCUG 213 / NBRC 12614 / NCIMB 9131 / NCTC 9757 / MK).